The following is a 609-amino-acid chain: Dihydroxy-acid dehydratase (609 aa).

Asp-81 provides a ligand contact to Mg(2+). Cys-122 contacts [2Fe-2S] cluster. Residues Asp-123 and Lys-124 each contribute to the Mg(2+) site. N6-carboxylysine is present on Lys-124. Cys-195 serves as a coordination point for [2Fe-2S] cluster. Glu-491 provides a ligand contact to Mg(2+). Ser-517 acts as the Proton acceptor in catalysis.

Belongs to the IlvD/Edd family. As to quaternary structure, homodimer. [2Fe-2S] cluster serves as cofactor. The cofactor is Mg(2+).

The catalysed reaction is (2R)-2,3-dihydroxy-3-methylbutanoate = 3-methyl-2-oxobutanoate + H2O. The enzyme catalyses (2R,3R)-2,3-dihydroxy-3-methylpentanoate = (S)-3-methyl-2-oxopentanoate + H2O. Its pathway is amino-acid biosynthesis; L-isoleucine biosynthesis; L-isoleucine from 2-oxobutanoate: step 3/4. It participates in amino-acid biosynthesis; L-valine biosynthesis; L-valine from pyruvate: step 3/4. Its function is as follows. Functions in the biosynthesis of branched-chain amino acids. Catalyzes the dehydration of (2R,3R)-2,3-dihydroxy-3-methylpentanoate (2,3-dihydroxy-3-methylvalerate) into 2-oxo-3-methylpentanoate (2-oxo-3-methylvalerate) and of (2R)-2,3-dihydroxy-3-methylbutanoate (2,3-dihydroxyisovalerate) into 2-oxo-3-methylbutanoate (2-oxoisovalerate), the penultimate precursor to L-isoleucine and L-valine, respectively. The protein is Dihydroxy-acid dehydratase of Acinetobacter baumannii (strain ACICU).